Here is a 119-residue protein sequence, read N- to C-terminus: NLLQFGFMIRCANRRSRPVWHYMDYGCYCGKGGSGTPVDDLDRCCQVHDECYGEAVRRFGCAPYWTLYSWKCYGKAPTCNTKTRCQRFVCRCDAKAAECFARSPYQNSNWNINTKARCR.

Disulfide bonds link Cys11–Cys72, Cys27–Cys118, Cys29–Cys45, Cys44–Cys99, Cys51–Cys92, Cys61–Cys85, and Cys79–Cys90. Tyr28, Gly30, and Gly32 together coordinate Ca(2+). The active site involves His48. Ca(2+) is bound at residue Asp49. Residue Asp93 is part of the active site.

The protein belongs to the phospholipase A2 family. Group I subfamily. D49 sub-subfamily. In terms of assembly, heterotrimer of alpha, beta, and gamma chains; non-covalently linked. Ca(2+) is required as a cofactor. Expressed by the venom gland.

The protein localises to the secreted. The enzyme catalyses a 1,2-diacyl-sn-glycero-3-phosphocholine + H2O = a 1-acyl-sn-glycero-3-phosphocholine + a fatty acid + H(+). In terms of biological role, heterotrimer: Snake venom phospholipase A2 (PLA2) heterotrimer that acts as a potent presynaptic neurotoxin by blocking synaptic transmission and synaptic vesicle recycling. May act by binding in a calcium-dependent fashion to neurotonal pentraxin-1 (NPTX1) and neurotonal pentraxin-2 (NPTX2), but not to neuronal pentraxin receptor (NPTXR). Also binds to taipoxin-associated calcium binding protein 49 (RCN2), a protein localized in the lumen of endoplasmic reticulum. Its function is as follows. Monomer (alpha chain): Snake venom phospholipase A2 (PLA2) alpha chain that possesses the same high enzymatic activity as the heterotrimer. PLA2 catalyzes the calcium-dependent hydrolysis of the 2-acyl groups in 3-sn-phosphoglycerides. The polypeptide is Basic phospholipase A2 taipoxin alpha chain (Oxyuranus scutellatus scutellatus (Australian taipan)).